A 435-amino-acid chain; its full sequence is Legumain (435 aa).

The signal sequence occupies residues 1-17; it reads MTWRVAVLLSLVLGAGA. A glycan (N-linked (GlcNAc...) asparagine) is linked at asparagine 93. Histidine 150 is a catalytic residue. A glycan (N-linked (GlcNAc...) asparagine) is linked at asparagine 169. The Nucleophile role is filled by cysteine 191. Residues asparagine 215, asparagine 265, and asparagine 274 are each glycosylated (N-linked (GlcNAc...) asparagine). Positions 326 to 435 are excised as a propeptide; the sequence is NMKESQVLVG…AMDKVCLSHY (110 aa). 2 cysteine pairs are disulfide-bonded: cysteine 380/cysteine 414 and cysteine 392/cysteine 431.

It belongs to the peptidase C13 family. Homodimer before autocatalytic removal of the propeptide. Monomer after autocatalytic processing. May interact with integrins. Post-translationally, activated by autocatalytic processing at pH 4. Detected in kidney cortex (at protein level).

The protein resides in the lysosome. It carries out the reaction Hydrolysis of proteins and small molecule substrates at -Asn-|-Xaa- bonds.. Functionally, has a strict specificity for hydrolysis of asparaginyl bonds. Can also cleave aspartyl bonds slowly, especially under acidic conditions. Involved in the processing of proteins for MHC class II antigen presentation in the lysosomal/endosomal system. Also involved in MHC class I antigen presentation in cross-presenting dendritic cells by mediating cleavage and maturation of Perforin-2 (MPEG1), thereby promoting antigen translocation in the cytosol. Required for normal lysosomal protein degradation in renal proximal tubules. Required for normal degradation of internalized EGFR. Plays a role in the regulation of cell proliferation via its role in EGFR degradation. This Rattus norvegicus (Rat) protein is Legumain (Lgmn).